The following is a 168-amino-acid chain: Phosphopantetheine adenylyltransferase (168 aa).

A substrate-binding site is contributed by Thr9. Residues 9-10 and His17 each bind ATP; that span reads TF. Positions 41, 74, and 88 each coordinate substrate. ATP-binding positions include 89-91, Glu99, and 124-130; these read GLR and LQPIASR.

Belongs to the bacterial CoaD family. As to quaternary structure, homohexamer. Requires Mg(2+) as cofactor.

Its subcellular location is the cytoplasm. It catalyses the reaction (R)-4'-phosphopantetheine + ATP + H(+) = 3'-dephospho-CoA + diphosphate. It participates in cofactor biosynthesis; coenzyme A biosynthesis; CoA from (R)-pantothenate: step 4/5. In terms of biological role, reversibly transfers an adenylyl group from ATP to 4'-phosphopantetheine, yielding dephospho-CoA (dPCoA) and pyrophosphate. The polypeptide is Phosphopantetheine adenylyltransferase (Sphingopyxis alaskensis (strain DSM 13593 / LMG 18877 / RB2256) (Sphingomonas alaskensis)).